The chain runs to 277 residues: Putative phosphoenolpyruvate synthase regulatory protein (277 aa).

156 to 163 (GVSRAGKT) lines the ADP pocket.

It belongs to the pyruvate, phosphate/water dikinase regulatory protein family. PSRP subfamily.

The enzyme catalyses [pyruvate, water dikinase] + ADP = [pyruvate, water dikinase]-phosphate + AMP + H(+). The catalysed reaction is [pyruvate, water dikinase]-phosphate + phosphate + H(+) = [pyruvate, water dikinase] + diphosphate. Its function is as follows. Bifunctional serine/threonine kinase and phosphorylase involved in the regulation of the phosphoenolpyruvate synthase (PEPS) by catalyzing its phosphorylation/dephosphorylation. This chain is Putative phosphoenolpyruvate synthase regulatory protein, found in Deinococcus radiodurans (strain ATCC 13939 / DSM 20539 / JCM 16871 / CCUG 27074 / LMG 4051 / NBRC 15346 / NCIMB 9279 / VKM B-1422 / R1).